The primary structure comprises 253 residues: GTP cyclohydrolase III (253 aa).

This sequence belongs to the archaeal-type GTP cyclohydrolase family.

The catalysed reaction is GTP + 3 H2O = 2-amino-5-formylamino-6-(5-phospho-D-ribosylamino)pyrimidin-4(3H)-one + 2 phosphate + 2 H(+). Catalyzes the formation of 2-amino-5-formylamino-6-ribofuranosylamino-4(3H)-pyrimidinone ribonucleotide monophosphate and inorganic phosphate from GTP. Also has an independent pyrophosphate phosphohydrolase activity. This chain is GTP cyclohydrolase III, found in Natronomonas pharaonis (strain ATCC 35678 / DSM 2160 / CIP 103997 / JCM 8858 / NBRC 14720 / NCIMB 2260 / Gabara) (Halobacterium pharaonis).